Here is a 207-residue protein sequence, read N- to C-terminus: Ion-translocating oxidoreductase complex subunit G (207 aa).

A helical membrane pass occupies residues 11-31; the sequence is GILLGFIALLCTIISAGIYFL. An FMN phosphoryl threonine modification is found at Thr-175.

It belongs to the RnfG family. As to quaternary structure, the complex is composed of six subunits: RnfA, RnfB, RnfC, RnfD, RnfE and RnfG. Requires FMN as cofactor.

It localises to the cell inner membrane. In terms of biological role, part of a membrane-bound complex that couples electron transfer with translocation of ions across the membrane. This is Ion-translocating oxidoreductase complex subunit G from Haemophilus influenzae (strain PittEE).